The sequence spans 405 residues: Argininosuccinate synthase (405 aa).

Residues 10–18 and Ala-37 each bind ATP; that span reads AYSGGLDTS. L-citrulline contacts are provided by Tyr-88 and Ser-93. Gly-118 contributes to the ATP binding site. Positions 120, 124, and 125 each coordinate L-aspartate. An L-citrulline-binding site is contributed by Asn-124. Positions 128, 179, 188, 264, and 276 each coordinate L-citrulline.

Belongs to the argininosuccinate synthase family. Type 1 subfamily. As to quaternary structure, homotetramer.

It is found in the cytoplasm. It carries out the reaction L-citrulline + L-aspartate + ATP = 2-(N(omega)-L-arginino)succinate + AMP + diphosphate + H(+). Its pathway is amino-acid biosynthesis; L-arginine biosynthesis; L-arginine from L-ornithine and carbamoyl phosphate: step 2/3. The chain is Argininosuccinate synthase from Pseudomonas entomophila (strain L48).